Here is a 466-residue protein sequence, read N- to C-terminus: RUS family member 1 (466 aa).

Alanine 2 is subject to N-acetylalanine. A helical transmembrane segment spans residues 245–265; that stretch reads LLMLPLVSDCPSLSLGCFVLL.

It belongs to the RUS1 family.

It localises to the membrane. In Mus musculus (Mouse), this protein is RUS family member 1.